A 229-amino-acid chain; its full sequence is MKLSFHGQSTIYLEGNNKKVIVDPFISNNPKCDLNIETVQVDYIVLTHGHFDHFGDVVELAKKTGATVIGSAEMADYLSSYHGVENVHGMNIGGKANFDFGSVKFVQAFHSSSFTHENGIPVYLGMPIGIVFEVEGKTIYHTGDTGLFSDMSLIAKRHPVDVCFVPIGDNFTMGIDDASYAINEFIKPKISVPIHYDTFPLIEQDPQQFKDAVNVGDVQILKPGESVQF.

Belongs to the UPF0173 family.

In Staphylococcus aureus (strain bovine RF122 / ET3-1), this protein is UPF0173 metal-dependent hydrolase SAB1566c.